The following is a 226-amino-acid chain: Protein GrpE (226 aa).

Disordered regions lie at residues 1–24 (MADEKNKPENPDLDQRDINNPRDR) and 205–226 (GVSKGGPKVSAENGASTSEDNA). The segment covering 217 to 226 (NGASTSEDNA) has biased composition (polar residues).

It belongs to the GrpE family. As to quaternary structure, homodimer.

The protein localises to the cytoplasm. Its function is as follows. Participates actively in the response to hyperosmotic and heat shock by preventing the aggregation of stress-denatured proteins, in association with DnaK and GrpE. It is the nucleotide exchange factor for DnaK and may function as a thermosensor. Unfolded proteins bind initially to DnaJ; upon interaction with the DnaJ-bound protein, DnaK hydrolyzes its bound ATP, resulting in the formation of a stable complex. GrpE releases ADP from DnaK; ATP binding to DnaK triggers the release of the substrate protein, thus completing the reaction cycle. Several rounds of ATP-dependent interactions between DnaJ, DnaK and GrpE are required for fully efficient folding. The chain is Protein GrpE from Brucella melitensis biotype 1 (strain ATCC 23456 / CCUG 17765 / NCTC 10094 / 16M).